A 189-amino-acid polypeptide reads, in one-letter code: UPF0312 protein VC_A0539 (189 aa).

The signal sequence occupies residues 1 to 22 (MKKTLMAVGLAAVMSIPFAANA).

It belongs to the UPF0312 family. Type 1 subfamily.

Its subcellular location is the periplasm. The chain is UPF0312 protein VC_A0539 from Vibrio cholerae serotype O1 (strain ATCC 39315 / El Tor Inaba N16961).